The primary structure comprises 61 residues: Small ribosomal subunit protein uS14 (61 aa).

4 residues coordinate Zn(2+): C24, C27, C40, and C43.

Belongs to the universal ribosomal protein uS14 family. Zinc-binding uS14 subfamily. Part of the 30S ribosomal subunit. Contacts proteins S3 and S10. Zn(2+) serves as cofactor.

In terms of biological role, binds 16S rRNA, required for the assembly of 30S particles and may also be responsible for determining the conformation of the 16S rRNA at the A site. This chain is Small ribosomal subunit protein uS14, found in Aliarcobacter butzleri (strain RM4018) (Arcobacter butzleri).